We begin with the raw amino-acid sequence, 357 residues long: MSNSIDSQSIPTISPTDYTKFDPDTIHEKLDASLSRPQLNTDGSIRHFLGIEGLNKAQLRAIIAKAETFFDDKGQLINRPELEGYTVMNLFFEPSTRTRTTFEVAEKRLGANVLNIDIERSSTKKGESLRDTLWNLQAMTADIFVVRHSASGAAHFMATEVTPDIAIINGGDGWHAHPTQGMLDMLTIHREAPRPFEELSVAIVGDIKHSRVARSDISALQTLGVKDIRVCAPRTLLPKGIERFGVQVYENMNECVTDCDVIMGLRIQNERIGSPLLASSSEYYKHYGITPERMALAKPDAFVMHPGPMNRGVEIASSVADGAQSVILKQVNNGIAIRMAVLSLAMEGQRAHQAAGN.

Residues 1 to 17 (MSNSIDSQSIPTISPTD) are compositionally biased toward polar residues. A disordered region spans residues 1 to 21 (MSNSIDSQSIPTISPTDYTKF). Arg97 and Thr98 together coordinate carbamoyl phosphate. Lys125 provides a ligand contact to L-aspartate. Carbamoyl phosphate is bound by residues Arg147, His177, and Gln180. 2 residues coordinate L-aspartate: Arg211 and Arg266. Carbamoyl phosphate-binding residues include Gly307 and Pro308.

This sequence belongs to the aspartate/ornithine carbamoyltransferase superfamily. ATCase family. In terms of assembly, heterododecamer (2C3:3R2) of six catalytic PyrB chains organized as two trimers (C3), and six regulatory PyrI chains organized as three dimers (R2).

The enzyme catalyses carbamoyl phosphate + L-aspartate = N-carbamoyl-L-aspartate + phosphate + H(+). It functions in the pathway pyrimidine metabolism; UMP biosynthesis via de novo pathway; (S)-dihydroorotate from bicarbonate: step 2/3. Catalyzes the condensation of carbamoyl phosphate and aspartate to form carbamoyl aspartate and inorganic phosphate, the committed step in the de novo pyrimidine nucleotide biosynthesis pathway. In Psychrobacter arcticus (strain DSM 17307 / VKM B-2377 / 273-4), this protein is Aspartate carbamoyltransferase catalytic subunit.